A 149-amino-acid chain; its full sequence is Nucleoside diphosphate kinase 1 (149 aa).

ATP-binding residues include Lys-9, Phe-57, Arg-85, Thr-91, Arg-102, and Asn-112. His-115 (pros-phosphohistidine intermediate) is an active-site residue.

In terms of assembly, homohexamer. Mg(2+) is required as a cofactor.

It catalyses the reaction a 2'-deoxyribonucleoside 5'-diphosphate + ATP = a 2'-deoxyribonucleoside 5'-triphosphate + ADP. The catalysed reaction is a ribonucleoside 5'-diphosphate + ATP = a ribonucleoside 5'-triphosphate + ADP. Functionally, major role in the synthesis of nucleoside triphosphates other than ATP. The ATP gamma phosphate is transferred to the NDP beta phosphate via a ping-pong mechanism, using a phosphorylated active-site intermediate. This NDK is microtubule-associated. The protein is Nucleoside diphosphate kinase 1 (NDKR) of Oryza sativa subsp. indica (Rice).